The chain runs to 175 residues: Probable S-adenosyl-L-methionine-binding protein VirR (175 aa).

The TsaA-like domain maps to 35-165 (LFFVGKIRTP…DRSLSKPLAP (131 aa)). S-adenosyl-L-methionine-binding positions include 52–54 (PRQ), 90–91 (HE), arginine 114, threonine 124, and 145–148 (LDGT).

It belongs to the tRNA methyltransferase O family.

This Rhizobium radiobacter (Agrobacterium tumefaciens) protein is Probable S-adenosyl-L-methionine-binding protein VirR (virR).